A 309-amino-acid chain; its full sequence is D-alanine--D-alanine ligase (309 aa).

An ATP-grasp domain is found at 104-301 (KQIWQGSDLP…FDALCVEILA (198 aa)). ATP is bound at residue 130-185 (VASLGLPVIIKPVHEGSSIGMSKVEKIEDFAPAIEKATAHDAIVMAEKWITGREYT). Positions 255, 268, and 270 each coordinate Mg(2+).

It belongs to the D-alanine--D-alanine ligase family. It depends on Mg(2+) as a cofactor. The cofactor is Mn(2+).

It localises to the cytoplasm. The catalysed reaction is 2 D-alanine + ATP = D-alanyl-D-alanine + ADP + phosphate + H(+). It participates in cell wall biogenesis; peptidoglycan biosynthesis. In terms of biological role, cell wall formation. In Acinetobacter baylyi (strain ATCC 33305 / BD413 / ADP1), this protein is D-alanine--D-alanine ligase.